A 316-amino-acid chain; its full sequence is Ribosomal RNA small subunit methyltransferase H (316 aa).

S-adenosyl-L-methionine contacts are provided by residues 35–37, Asp55, Phe84, Asp105, and Gln112; that span reads AGH.

Belongs to the methyltransferase superfamily. RsmH family.

It is found in the cytoplasm. The catalysed reaction is cytidine(1402) in 16S rRNA + S-adenosyl-L-methionine = N(4)-methylcytidine(1402) in 16S rRNA + S-adenosyl-L-homocysteine + H(+). In terms of biological role, specifically methylates the N4 position of cytidine in position 1402 (C1402) of 16S rRNA. This is Ribosomal RNA small subunit methyltransferase H from Streptococcus mutans serotype c (strain ATCC 700610 / UA159).